Here is a 185-residue protein sequence, read N- to C-terminus: MIDETLLEAEEKMERAIEHAKEEFGAIRTGRANAAMFSKIIIDYYGSPTPLPQMASIGVPEPRMVIIKPYDNSQTNAMEKAIRDSDLGVNPNNEGNQLRILLPQMTEERRREMIKVARHKGEEAKVAVRNIRRKAKEELDRLVKAGEVGEDEGRRAEKELDDLTQRFVGVVDELIKHKEAELLEV.

Belongs to the RRF family.

It localises to the cytoplasm. Functionally, responsible for the release of ribosomes from messenger RNA at the termination of protein biosynthesis. May increase the efficiency of translation by recycling ribosomes from one round of translation to another. This Salinispora arenicola (strain CNS-205) protein is Ribosome-recycling factor.